Consider the following 431-residue polypeptide: 5-methylthioadenosine/S-adenosylhomocysteine deaminase (431 aa).

Zn(2+) is bound by residues H60 and H62. 2 residues coordinate substrate: E89 and H182. H209 contributes to the Zn(2+) binding site. 2 residues coordinate substrate: E212 and D297. D297 lines the Zn(2+) pocket.

This sequence belongs to the metallo-dependent hydrolases superfamily. MTA/SAH deaminase family. The cofactor is Zn(2+).

The catalysed reaction is S-adenosyl-L-homocysteine + H2O + H(+) = S-inosyl-L-homocysteine + NH4(+). The enzyme catalyses S-methyl-5'-thioadenosine + H2O + H(+) = S-methyl-5'-thioinosine + NH4(+). In terms of biological role, catalyzes the deamination of 5-methylthioadenosine and S-adenosyl-L-homocysteine into 5-methylthioinosine and S-inosyl-L-homocysteine, respectively. Is also able to deaminate adenosine. This is 5-methylthioadenosine/S-adenosylhomocysteine deaminase from Natronomonas pharaonis (strain ATCC 35678 / DSM 2160 / CIP 103997 / JCM 8858 / NBRC 14720 / NCIMB 2260 / Gabara) (Halobacterium pharaonis).